The sequence spans 4646 residues: Cytoplasmic dynein 1 heavy chain 1 (4646 aa).

Ser-2 carries the post-translational modification N-acetylserine. The tract at residues 53–1867 (EAALEEKSAL…SIQMANAKFN (1815 aa)) is stem. At Ser-70 the chain carries Phosphoserine. Coiled coils occupy residues 181-202 (SVEKKIAELEMGLLHLQQNIEI), 455-478 (AHRKLQARLDQMRKFRRQHEQLRA), and 543-566 (TEAWEAAMKRYDERIDRVETRITA). The interaction with DYNC1I2 stretch occupies residues 448–703 (MVWRINPAHR…NTQEIFDDWA (256 aa)). An interaction with DYNC1LI2 region spans residues 651-802 (AKQIDRQLTA…EKVEERNTIS (152 aa)). Lys-1125 carries the post-translational modification N6-acetyllysine. 2 coiled-coil regions span residues 1171–1252 (TYVQ…AVES) and 1357–1373 (RKLRQNLDALLNQLKSF). A Phosphoserine modification is found at Ser-1230. 4 AAA regions span residues 1868–2099 (YGFE…VLVS), 2180–2452 (EELK…LTRL), 2556–2805 (EVET…WVRG), and 2899–3168 (VFYE…GGRT). ATP contacts are provided by residues 1906 to 1913 (GPAGTGKT) and 2224 to 2231 (GPSGSGKS). Residues 2390–2411 (GEDEAQRRRKGKEDEGEEAASP) are disordered. Residues 2595–2602 (GPPGSGKT) and 2937–2944 (GVSGAGKT) each bind ATP. 3 coiled-coil regions span residues 3189-3275 (EKRS…ADKQ), 3396-3500 (AIAQ…KNQM), and 3737-3800 (EFQL…VSQQ). Residues 3189–3500 (EKRSELEEQQ…KTSETFKNQM (312 aa)) are stalk. Lys-3480 bears the N6-acetyllysine mark. AAA stretches follow at residues 3553 to 3782 (LSNA…EVTR) and 4005 to 4221 (AHMF…TVDT). Position 4162 is a phosphoserine (Ser-4162). An N6-acetyllysine modification is found at Lys-4283. A Phosphothreonine modification is found at Thr-4366. Ser-4368 is modified (phosphoserine).

This sequence belongs to the dynein heavy chain family. In terms of assembly, homodimer. The cytoplasmic dynein 1 complex consists of two catalytic heavy chains (HCs) and a number of non-catalytic subunits presented by intermediate chains (ICs), light intermediate chains (LICs) and light chains (LCs); the composition seems to vary in respect to the IC, LIC and LC composition. The heavy chain homodimer serves as a scaffold for the probable homodimeric assembly of the respective non-catalytic subunits. The ICs and LICs bind directly to the HC dimer and dynein LCs assemble on the IC dimer. Interacts with DYNC1LI1; DYNC1LI1 and DYNC1LI2 bind mutually exclusive to DYNC1H1. Interacts with DYNC1LI2; DYNC1LI1 and DYNC1LI2 bind mutually exclusive to DYNC1H1. Interacts with DYNC1I2. Interacts with BICD2. Interacts with isoform 2 of CRACR2A. Interacts with DNALI1.

The protein localises to the cytoplasm. Its subcellular location is the cytoskeleton. Cytoplasmic dynein 1 acts as a motor for the intracellular retrograde motility of vesicles and organelles along microtubules. Dynein has ATPase activity; the force-producing power stroke is thought to occur on release of ADP. Plays a role in mitotic spindle assembly and metaphase plate congression. This chain is Cytoplasmic dynein 1 heavy chain 1, found in Homo sapiens (Human).